A 127-amino-acid chain; its full sequence is Large-conductance mechanosensitive channel (127 aa).

3 consecutive transmembrane segments (helical) span residues 9-29, 32-52, and 75-95; these read EFAM…GVAF, IVTA…LGGI, and VIDF…INLL.

This sequence belongs to the MscL family. Homopentamer.

It localises to the cell inner membrane. Channel that opens in response to stretch forces in the membrane lipid bilayer. May participate in the regulation of osmotic pressure changes within the cell. This Legionella pneumophila subsp. pneumophila (strain Philadelphia 1 / ATCC 33152 / DSM 7513) protein is Large-conductance mechanosensitive channel.